A 269-amino-acid polypeptide reads, in one-letter code: uncharacterized protein (269 aa).

This is an uncharacterized protein from Schizosaccharomyces pombe (strain 972 / ATCC 24843) (Fission yeast).